We begin with the raw amino-acid sequence, 79 residues long: Probable [Fe-S]-dependent transcriptional repressor (79 aa).

Iron-sulfur cluster-binding residues include Cys54, Cys59, Cys62, and Cys68.

Belongs to the FeoC family.

Its function is as follows. May function as a transcriptional regulator that controls feoABC expression. The chain is Probable [Fe-S]-dependent transcriptional repressor from Photorhabdus laumondii subsp. laumondii (strain DSM 15139 / CIP 105565 / TT01) (Photorhabdus luminescens subsp. laumondii).